We begin with the raw amino-acid sequence, 662 residues long: A-kinase anchor protein 10, mitochondrial (662 aa).

The N-terminal 28 residues, 1–28 (MRGAGPSPRHSPRALRPDPGPAMSFFRR), are a transit peptide targeting the mitochondrion. 3 disordered regions span residues 1–55 (MRGA…SPQK), 178–205 (KQSS…ALDR), and 242–280 (GHSA…NSCS). Residues 32-43 (GKEQEKTLDVKS) show a composition bias toward basic and acidic residues. A phosphoserine mark is found at Ser52 and Ser189. 2 RGS domains span residues 125–369 (TLEQ…CKYQ) and 379–505 (YLAD…YKYL). Residues 256–280 (GSHQIPTDSQDSSSRLAVGSRNSCS) show a composition bias toward polar residues. A Phosphoserine modification is found at Ser281. Positions 634-647 (LAWKIAKMIVSDVM) are PKA-RII subunit binding.

As to expression, highly expressed in testis, kidney and lung, followed by brain, skeletal muscle, liver, spleen and heart. Also expressed in brown adipose tissue and pancreas.

The protein resides in the mitochondrion. Its subcellular location is the membrane. It is found in the cytoplasm. Its function is as follows. Differentially targeted protein that binds to type I and II regulatory subunits of protein kinase A and anchors them to the mitochondria or the plasma membrane. Although the physiological relevance between PKA and AKAPS with mitochondria is not fully understood, one idea is that BAD, a proapoptotic member, is phosphorylated and inactivated by mitochondria-anchored PKA. It cannot be excluded too that it may facilitate PKA as well as G protein signal transduction, by acting as an adapter for assembling multiprotein complexes. With its RGS domain, it could lead to the interaction to G-alpha proteins, providing a link between the signaling machinery and the downstream kinase. The protein is A-kinase anchor protein 10, mitochondrial (Akap10) of Mus musculus (Mouse).